We begin with the raw amino-acid sequence, 920 residues long: Valine--tRNA ligase (920 aa).

The 'HIGH' region signature appears at 40–50 (PNVTGTLHMGH). The 'KMSKS' region signature appears at 522-526 (KMSKS). Residue Lys525 participates in ATP binding. 2 coiled-coil regions span residues 642 to 668 (EWIR…DLLA) and 849 to 920 (AGVI…IESL).

It belongs to the class-I aminoacyl-tRNA synthetase family. ValS type 1 subfamily. In terms of assembly, monomer.

Its subcellular location is the cytoplasm. It catalyses the reaction tRNA(Val) + L-valine + ATP = L-valyl-tRNA(Val) + AMP + diphosphate. In terms of biological role, catalyzes the attachment of valine to tRNA(Val). As ValRS can inadvertently accommodate and process structurally similar amino acids such as threonine, to avoid such errors, it has a 'posttransfer' editing activity that hydrolyzes mischarged Thr-tRNA(Val) in a tRNA-dependent manner. In Coxiella burnetii (strain RSA 493 / Nine Mile phase I), this protein is Valine--tRNA ligase.